Consider the following 330-residue polypeptide: Ketol-acid reductoisomerase (NADP(+)) (330 aa).

The region spanning 1–181 is the KARI N-terminal Rossmann domain; it reads MNAYYEQDAD…GGTKAGVIET (181 aa). Residues 24-27, Arg47, Ser50, Ser52, and 82-85 contribute to the NADP(+) site; these read YGSQ and DQYQ. His107 is an active-site residue. Residue Gly133 participates in NADP(+) binding. One can recognise a KARI C-terminal knotted domain in the interval 182–327; the sequence is TFKNETETDL…SKLRDMMSWL (146 aa). Mg(2+)-binding residues include Asp190, Glu194, Glu226, and Glu230. Ser251 contributes to the substrate binding site.

It belongs to the ketol-acid reductoisomerase family. Mg(2+) serves as cofactor.

The catalysed reaction is (2R)-2,3-dihydroxy-3-methylbutanoate + NADP(+) = (2S)-2-acetolactate + NADPH + H(+). It catalyses the reaction (2R,3R)-2,3-dihydroxy-3-methylpentanoate + NADP(+) = (S)-2-ethyl-2-hydroxy-3-oxobutanoate + NADPH + H(+). It participates in amino-acid biosynthesis; L-isoleucine biosynthesis; L-isoleucine from 2-oxobutanoate: step 2/4. Its pathway is amino-acid biosynthesis; L-valine biosynthesis; L-valine from pyruvate: step 2/4. Functionally, involved in the biosynthesis of branched-chain amino acids (BCAA). Catalyzes an alkyl-migration followed by a ketol-acid reduction of (S)-2-acetolactate (S2AL) to yield (R)-2,3-dihydroxy-isovalerate. In the isomerase reaction, S2AL is rearranged via a Mg-dependent methyl migration to produce 3-hydroxy-3-methyl-2-ketobutyrate (HMKB). In the reductase reaction, this 2-ketoacid undergoes a metal-dependent reduction by NADPH to yield (R)-2,3-dihydroxy-isovalerate. The polypeptide is Ketol-acid reductoisomerase (NADP(+)) (Chlorobium limicola (strain DSM 245 / NBRC 103803 / 6330)).